Reading from the N-terminus, the 497-residue chain is Nuclear pore complex protein npp-16 (497 aa).

Disordered regions lie at residues 76 to 95, 210 to 308, and 359 to 379; these read VPRRTENSSESSGETVAPRK, TKKS…SAPK, and MENQNQAKPEGSGEDDEGEYV. 2 stretches are compositionally biased toward basic and acidic residues: residues 231–240 and 250–260; these read KDGDKPKETP and KPAEPSEEPKA. The interval 390 to 497 is ranBD1; that stretch reads EPDAVLSSKV…FTDKILEVAV (108 aa).

As to quaternary structure, interacts with importin beta imb-1. Interacts with DNA-directed RNA polymerase III subunit rpc-1. Interacts with TATA-box-binding protein tbp-1. Interacts with GTF3C5 homolog tftc-5. Interacts with GTF3C3 homolog tftc-3.

It localises to the nucleus. It is found in the nuclear pore complex. The protein resides in the nucleus membrane. Component of the nuclear pore complex. Plays a direct role in nuclear protein import. Required for anoxia-induced prophase arrest; may function in concert with cdk-1 to arrest prophase blastomeres in response to anoxia. The sequence is that of Nuclear pore complex protein npp-16 from Caenorhabditis elegans.